A 271-amino-acid polypeptide reads, in one-letter code: NADH-quinone oxidoreductase subunit B (271 aa).

C37, C38, C103, and C132 together coordinate [4Fe-4S] cluster. The segment at 227-271 (LAPPSVFGRAKRIPVDPKPSDEARAHGPGPTTESIGDVDGPDRGI) is disordered. Basic and acidic residues predominate over residues 239–251 (IPVDPKPSDEARA).

The protein belongs to the complex I 20 kDa subunit family. In terms of assembly, NDH-1 is composed of 14 different subunits. Subunits NuoB, C, D, E, F, and G constitute the peripheral sector of the complex. The cofactor is [4Fe-4S] cluster.

It is found in the cell membrane. The catalysed reaction is a quinone + NADH + 5 H(+)(in) = a quinol + NAD(+) + 4 H(+)(out). NDH-1 shuttles electrons from NADH, via FMN and iron-sulfur (Fe-S) centers, to quinones in the respiratory chain. The immediate electron acceptor for the enzyme in this species is believed to be a menaquinone. Couples the redox reaction to proton translocation (for every two electrons transferred, four hydrogen ions are translocated across the cytoplasmic membrane), and thus conserves the redox energy in a proton gradient. The protein is NADH-quinone oxidoreductase subunit B of Frankia casuarinae (strain DSM 45818 / CECT 9043 / HFP020203 / CcI3).